A 306-amino-acid polypeptide reads, in one-letter code: Aspartate carbamoyltransferase catalytic subunit (306 aa).

Carbamoyl phosphate-binding residues include Arg51 and Thr52. Lys79 is an L-aspartate binding site. Carbamoyl phosphate contacts are provided by Arg101, His129, and Gln132. The L-aspartate site is built by Arg162 and Arg213. 2 residues coordinate carbamoyl phosphate: Ala254 and Pro255.

The protein belongs to the aspartate/ornithine carbamoyltransferase superfamily. ATCase family. Heterododecamer (2C3:3R2) of six catalytic PyrB chains organized as two trimers (C3), and six regulatory PyrI chains organized as three dimers (R2).

The enzyme catalyses carbamoyl phosphate + L-aspartate = N-carbamoyl-L-aspartate + phosphate + H(+). Its pathway is pyrimidine metabolism; UMP biosynthesis via de novo pathway; (S)-dihydroorotate from bicarbonate: step 2/3. In terms of biological role, catalyzes the condensation of carbamoyl phosphate and aspartate to form carbamoyl aspartate and inorganic phosphate, the committed step in the de novo pyrimidine nucleotide biosynthesis pathway. The protein is Aspartate carbamoyltransferase catalytic subunit of Bacillus thuringiensis (strain Al Hakam).